The primary structure comprises 139 residues: uncharacterized protein (139 aa).

This is an uncharacterized protein from Caenorhabditis elegans.